The sequence spans 246 residues: Probable septum site-determining protein MinC (246 aa).

The protein belongs to the MinC family. Interacts with MinD and FtsZ.

In terms of biological role, cell division inhibitor that blocks the formation of polar Z ring septums. Rapidly oscillates between the poles of the cell to destabilize FtsZ filaments that have formed before they mature into polar Z rings. Prevents FtsZ polymerization. The chain is Probable septum site-determining protein MinC from Pseudomonas syringae pv. tomato (strain ATCC BAA-871 / DC3000).